Consider the following 299-residue polypeptide: Ribonuclease H2 subunit A (299 aa).

Methionine 1 carries the N-acetylmethionine modification. One can recognise an RNase H type-2 domain in the interval 28 to 250 (PCVLGVDEAG…AQTILEKEAE (223 aa)). A divalent metal cation contacts are provided by aspartate 34, glutamate 35, and aspartate 141. 2 positions are modified to phosphothreonine: threonine 204 and threonine 216. A phosphoserine mark is found at serine 257 and serine 277.

The protein belongs to the RNase HII family. Eukaryotic subfamily. The RNase H2 complex is a heterotrimer composed of the catalytic subunit RNASEH2A and the non-catalytic subunits RNASEH2B and RNASEH2C. Mn(2+) is required as a cofactor. The cofactor is Mg(2+).

The protein localises to the nucleus. The catalysed reaction is Endonucleolytic cleavage to 5'-phosphomonoester.. Its function is as follows. Catalytic subunit of RNase HII, an endonuclease that specifically degrades the RNA of RNA:DNA hybrids. Participates in DNA replication, possibly by mediating the removal of lagging-strand Okazaki fragment RNA primers during DNA replication. Mediates the excision of single ribonucleotides from DNA:RNA duplexes. The chain is Ribonuclease H2 subunit A (RNASEH2A) from Homo sapiens (Human).